Reading from the N-terminus, the 699-residue chain is MNKLDISTINIEQLTSDHAKKIVDFLALELQKYDQAYYSDNNPLVTDAQYDVLKNLNNKIVAKFPHLALVNDHSKKVGFTPSAQFSKVVHLKPMLSLANGFCVEDISNFITKIQNFLKIDHCPKIVCEYKIDGLSFNARYEYGVLTLASTRGDGQIGENITENLKTIQSFPQTLPITDKVFEVRGEIYITNNDFRVLNIQQQKLGKALFSNPRNAAAGSIRQLDPAITAQRPLKYFVYALGEVTNHHFASTQFELLQKLSQLKFSVNTDYILSDNLHSMIEFYNNVATERNNLAFEIDGVVYKVNDFALQERLGATSTSPRFAIAYKFPALIGRTKITNITLQVGKTGAVTPVAWLIPINIAGVTISRATLHNKQEIESKDIRIGDYVFLHRAGDVIPKINGVDLSARDTQSSERFIFPTTCPSCNQNLVVNEGETVARCGNSLACQAQIYERICHFVSKDALNIDGLGKQRIQFLLDNKYIVNIVDIFLLEENNKFLYSNKLEDIAGWGIKSVNKLFQNINQAKNVILDKFIYALAIKHVGKYSAKLLAKEFKTAKNFINQSLKLANNATEIYEKLRNIEGVGVKTADQLKQFFMVSANVNLITKLVNILTIQDWQYHGDNLLLSNQTIVFTGTFATVSRSEIKVQAEKLGAKVGTQVSNNTDLLVVGNKAGNKLQKAQQLGIKIINEEEWIKMVNEL.

NAD(+) contacts are provided by residues 47–51, 96–97, and glutamate 128; these read DAQYD and SL. The active-site N6-AMP-lysine intermediate is lysine 130. Residues arginine 151, glutamate 186, lysine 303, and lysine 327 each contribute to the NAD(+) site. Zn(2+)-binding residues include cysteine 422, cysteine 425, cysteine 440, and cysteine 446. The BRCT domain occupies 620–699; it reads GDNLLLSNQT…EEWIKMVNEL (80 aa).

It belongs to the NAD-dependent DNA ligase family. LigA subfamily. The cofactor is Mg(2+). It depends on Mn(2+) as a cofactor.

The catalysed reaction is NAD(+) + (deoxyribonucleotide)n-3'-hydroxyl + 5'-phospho-(deoxyribonucleotide)m = (deoxyribonucleotide)n+m + AMP + beta-nicotinamide D-nucleotide.. In terms of biological role, DNA ligase that catalyzes the formation of phosphodiester linkages between 5'-phosphoryl and 3'-hydroxyl groups in double-stranded DNA using NAD as a coenzyme and as the energy source for the reaction. It is essential for DNA replication and repair of damaged DNA. The sequence is that of DNA ligase from Orientia tsutsugamushi (strain Ikeda) (Rickettsia tsutsugamushi).